Here is a 622-residue protein sequence, read N- to C-terminus: Chaperone protein HscA homolog (622 aa).

The protein belongs to the heat shock protein 70 family.

Functionally, chaperone involved in the maturation of iron-sulfur cluster-containing proteins. Has a low intrinsic ATPase activity which is markedly stimulated by HscB. The protein is Chaperone protein HscA homolog of Burkholderia pseudomallei (strain 1710b).